Consider the following 112-residue polypeptide: cAMP-regulated phosphoprotein 19 (112 aa).

At Met1 the chain carries N-acetylmethionine. Low complexity predominate over residues 1 to 11 (MSAEVPEAASA). Residues 1–49 (MSAEVPEAASAEEQKEMEDKVTSPEKAEEAKLKARYPHLGQKPGGSDFL) are disordered. Ser2 carries the post-translational modification N-acetylserine. Ser2 and Ser23 each carry phosphoserine. Residues 12-32 (EEQKEMEDKVTSPEKAEEAKL) are compositionally biased toward basic and acidic residues. 2 positions are modified to phosphoserine; by GWL: Ser62 and Ser104. The disordered stretch occupies residues 73-112 (KNKQLPTAAPDKTEVTGDHIPTPQDLPQRKPSLVASKLAG). Position 104 is a phosphoserine; by PKA (Ser104). Residue Lys109 is modified to N6-acetyllysine.

The protein belongs to the endosulfine family. Interacts (when phosphorylated at Ser-62) with PPP2R2D. Interacts with SNCA. Interacts with PPP2R2A; the interaction is direct and this interaction inhibits PP2A activity. Post-translationally, phosphorylation at Ser-62 by MASTL/GWL during mitosis is essential for interaction with PPP2R2D (PR55-delta) and subsequent inactivation of PP2A. Phosphorylated by PKA.

The protein resides in the cytoplasm. Its function is as follows. Protein phosphatase inhibitor that specifically inhibits protein phosphatase 2A (PP2A) during mitosis. Inhibition of PP2A is enhanced when ARPP19 is phosphorylated. When phosphorylated at Ser-62 during mitosis, specifically interacts with PPP2R2D (PR55-delta) and inhibits its activity, leading to inactivation of PP2A, an essential condition to keep cyclin-B1-CDK1 activity high during M phase. May indirectly enhance GAP-43 expression. This is cAMP-regulated phosphoprotein 19 (ARPP19) from Homo sapiens (Human).